The primary structure comprises 590 residues: Aspartate--tRNA ligase (590 aa).

L-aspartate is bound at residue glutamate 175. The aspartate stretch occupies residues 199 to 202 (QIFK). An L-aspartate-binding site is contributed by arginine 221. Residues 221-223 (RDE) and glutamine 230 each bind ATP. Histidine 449 is an L-aspartate binding site. Glutamate 483 contributes to the ATP binding site. Arginine 490 contacts L-aspartate. 535–538 (GLDR) lines the ATP pocket.

It belongs to the class-II aminoacyl-tRNA synthetase family. Type 1 subfamily. As to quaternary structure, homodimer.

The protein resides in the cytoplasm. The enzyme catalyses tRNA(Asp) + L-aspartate + ATP = L-aspartyl-tRNA(Asp) + AMP + diphosphate. In terms of biological role, catalyzes the attachment of L-aspartate to tRNA(Asp) in a two-step reaction: L-aspartate is first activated by ATP to form Asp-AMP and then transferred to the acceptor end of tRNA(Asp). The polypeptide is Aspartate--tRNA ligase (Geobacillus kaustophilus (strain HTA426)).